The sequence spans 514 residues: Serine--tRNA ligase, cytoplasmic (514 aa).

Met1 carries the N-acetylmethionine modification. Residues 9 to 61 (RVDKGGDPALIRESQEKRFKDPGLVDQLVKADSEWRRCRFRADNLNKLKNLCS) form an interaction with tRNA region. Ser241 is modified (phosphoserine). Residues Thr271 and Arg302 each contribute to the L-serine site. ATP contacts are provided by residues 302–304 (RQE) and 318–321 (VHQF). Lys323 carries the N6-acetyllysine modification. L-serine is bound at residue Glu325. Residue 391–394 (ELVS) coordinates ATP. L-serine is bound at residue Asn427. A disordered region spans residues 475–514 (PIDQEPSKKQKKQHEGSKKKGAARDVALESQLQNMEVTDA). The span at 479 to 501 (EPSKKQKKQHEGSKKKGAARDVA) shows a compositional bias: basic and acidic residues. The Nuclear localization signal motif lies at 482 to 494 (KKQKKQHEGSKKK). The span at 504 to 514 (SQLQNMEVTDA) shows a compositional bias: polar residues.

This sequence belongs to the class-II aminoacyl-tRNA synthetase family. Type-1 seryl-tRNA synthetase subfamily. Homodimer. The tRNA molecule may bind across the dimer. Interacts with SIRT2. Interacts with METTL6; interaction is required for the tRNA N(3)-methylcytidine methyltransferase activity of METTL6.

It localises to the cytoplasm. It is found in the nucleus. The enzyme catalyses tRNA(Ser) + L-serine + ATP = L-seryl-tRNA(Ser) + AMP + diphosphate + H(+). The catalysed reaction is tRNA(Sec) + L-serine + ATP = L-seryl-tRNA(Sec) + AMP + diphosphate + H(+). It participates in aminoacyl-tRNA biosynthesis; selenocysteinyl-tRNA(Sec) biosynthesis; L-seryl-tRNA(Sec) from L-serine and tRNA(Sec): step 1/1. In terms of biological role, catalyzes the attachment of serine to tRNA(Ser) in a two-step reaction: serine is first activated by ATP to form Ser-AMP and then transferred to the acceptor end of tRNA(Ser). Is probably also able to aminoacylate tRNA(Sec) with serine, to form the misacylated tRNA L-seryl-tRNA(Sec), which will be further converted into selenocysteinyl-tRNA(Sec). In the nucleus, binds to the VEGFA core promoter and prevents MYC binding and transcriptional activation by MYC. Recruits SIRT2 to the VEGFA promoter, promoting deacetylation of histone H4 at 'Lys-16' (H4K16). Thereby, inhibits the production of VEGFA and sprouting angiogenesis mediated by VEGFA. This chain is Serine--tRNA ligase, cytoplasmic (SARS1), found in Bos taurus (Bovine).